The sequence spans 347 residues: uncharacterized protein (347 aa).

This is an uncharacterized protein from Mycoplasma genitalium (strain ATCC 33530 / DSM 19775 / NCTC 10195 / G37) (Mycoplasmoides genitalium).